A 335-amino-acid polypeptide reads, in one-letter code: Autophagy-related protein 21 (335 aa).

2 WD repeats span residues 165–205 (CHSS…LVTE) and 210–249 (YIPASIVSISFHPVEPFLACASENGTIHVFKISKQPSDPN).

This sequence belongs to the WD repeat PROPPIN family.

It localises to the cytoplasm. The protein localises to the golgi apparatus. The protein resides in the golgi stack membrane. It is found in the vacuole membrane. Its subcellular location is the preautophagosomal structure membrane. Functionally, required for cytoplasm to vacuole transport (Cvt) vesicles formation and autophagy. Has a role in sporulation. The sequence is that of Autophagy-related protein 21 (mug179) from Schizosaccharomyces pombe (strain 972 / ATCC 24843) (Fission yeast).